The primary structure comprises 644 residues: Threonine--tRNA ligase (644 aa).

The TGS domain maps to 1–61; the sequence is MVAITLPDGS…AHDAKVEIVT (61 aa). Positions 242–533 are catalytic; sequence DHRKIGKALN…LIENYAGWMP (292 aa). Positions 333, 384, and 510 each coordinate Zn(2+).

This sequence belongs to the class-II aminoacyl-tRNA synthetase family. In terms of assembly, homodimer. Zn(2+) is required as a cofactor.

The protein resides in the cytoplasm. The enzyme catalyses tRNA(Thr) + L-threonine + ATP = L-threonyl-tRNA(Thr) + AMP + diphosphate + H(+). Its function is as follows. Catalyzes the attachment of threonine to tRNA(Thr) in a two-step reaction: L-threonine is first activated by ATP to form Thr-AMP and then transferred to the acceptor end of tRNA(Thr). Also edits incorrectly charged L-seryl-tRNA(Thr). The chain is Threonine--tRNA ligase from Psychrobacter cryohalolentis (strain ATCC BAA-1226 / DSM 17306 / VKM B-2378 / K5).